The primary structure comprises 87 residues: U3-theraphotoxin-Hhn1a 6 (87 aa).

An N-terminal signal peptide occupies residues 1 to 24 (MVNMKASMFLTFAGLVLLFVVCYA). Residues 25-52 (SESEKKEFPKEMLSSIFAVDNDFKQEER) constitute a propeptide that is removed on maturation. Intrachain disulfides connect cysteine 54–cysteine 67, cysteine 61–cysteine 72, and cysteine 66–cysteine 79.

The protein belongs to the neurotoxin 10 (Hwtx-1) family. 51 (Hntx-8) subfamily. Hntx-8 sub-subfamily. In terms of tissue distribution, expressed by the venom gland.

The protein localises to the secreted. Functionally, ion channel inhibitor. The sequence is that of U3-theraphotoxin-Hhn1a 6 from Cyriopagopus hainanus (Chinese bird spider).